Reading from the N-terminus, the 79-residue chain is Cell division protein ZapB (79 aa).

The stretch at 4–78 forms a coiled coil; it reads EVFEKLESKV…LRALLGKMEE (75 aa).

Belongs to the ZapB family. Homodimer. The ends of the coiled-coil dimer bind to each other, forming polymers. Interacts with FtsZ.

The protein localises to the cytoplasm. In terms of biological role, non-essential, abundant cell division factor that is required for proper Z-ring formation. It is recruited early to the divisome by direct interaction with FtsZ, stimulating Z-ring assembly and thereby promoting cell division earlier in the cell cycle. Its recruitment to the Z-ring requires functional FtsA or ZipA. In Serratia proteamaculans (strain 568), this protein is Cell division protein ZapB.